A 128-amino-acid chain; its full sequence is NHP2-like protein 1 (128 aa).

Position 1 is an N-acetylmethionine (M1). N-acetylthreonine; in NHP2-like protein 1, N-terminally processed is present on T2. K21 bears the N6-acetyllysine mark. Positions 36-48 are interaction with U4 snRNA and U4atac snRNA; the sequence is RKGANEATKTLNR. Positions 96-128 are important for U4 snRNA-binding; the sequence is SRPVIACSVTIKEGSQLKQQIQSIQQSIERLLV. Phosphoserine is present on S122.

This sequence belongs to the eukaryotic ribosomal protein eL8 family. Identified in the spliceosome B complex. Component of the U4/U6-U5 tri-snRNP complex composed of the U4, U6 and U5 snRNAs and at least PRPF3, PRPF4, PRPF6, PRPF8, PRPF31, SNRNP200, TXNL4A, WDR57, SNRNP40, DDX23, CD2BP2, PPIH, NHP2L1, EFTUD2, SART1 and USP39. Interacts with RAD17 and PRPF31. The complex formed by SNU13 and PRPF31 binds U4 snRNA. The complex formed by SNU13 and PRPF31 also binds U4atac snRNA, a characteristic component of specific, less abundant spliceosomal complexes. Part of the small subunit (SSU) processome, composed of more than 70 proteins and the RNA chaperone small nucleolar RNA (snoRNA) U3. Core component of box C/D small nucleolar ribonucleoprotein (snoRNP) particles; the core proteins SNU13, NOP56, NOP58 and FBL or FBLL1 assemble stepwise onto the snoRNA.

Its subcellular location is the nucleus. It localises to the nucleolus. Its function is as follows. Part of the small subunit (SSU) processome, first precursor of the small eukaryotic ribosomal subunit. During the assembly of the SSU processome in the nucleolus, many ribosome biogenesis factors, an RNA chaperone and ribosomal proteins associate with the nascent pre-rRNA and work in concert to generate RNA folding, modifications, rearrangements and cleavage as well as targeted degradation of pre-ribosomal RNA by the RNA exosome. Involved in pre-mRNA splicing as component of the spliceosome. Binds to the 5'-stem-loop of U4 snRNA and thereby contributes to spliceosome assembly. The protein undergoes a conformational change upon RNA-binding. Core component of box C/D small nucleolar ribonucleoprotein (snoRNP) complexes that function in methylation of multiple sites on ribosomal RNAs (rRNAs) and messenger RNAs (mRNAs). This is NHP2-like protein 1 from Bos taurus (Bovine).